A 347-amino-acid chain; its full sequence is MLISQRPTLSEDVLTDNRSQFVIEPLEPGFGYTLGNSLRRTLLSSIPGAAVTSIRIDGVLHEFTTVPGVKEDVTEIILNLKSLVVSSEEDEPVTMYLRKQGPGEVTAGDIVPPAGVTVHNPGMHIATLNDKGKLEVELVVERGRGYVPAVQNRASGAEIGRIPVDSIYSPVLKVTYKVDATRVEQRTDFDKLILDVETKNSISPRDALASAGKTLVELFGLARELNVEAEGIEIGPSPAEADHIASFALPIDDLDLTVRSYNCLKREGVHTVGELVARTESDLLDIRNFGQKSIDEVKIKLHQLGLSLKDSPPSFDPSEVAGYDVATGTWSTEGAYDEQDYAETEQL.

The tract at residues M1 to N226 is alpha N-terminal domain (alpha-NTD). Positions H243–L347 are alpha C-terminal domain (alpha-CTD).

It belongs to the RNA polymerase alpha chain family. As to quaternary structure, homodimer. The RNAP catalytic core consists of 2 alpha, 1 beta, 1 beta' and 1 omega subunit. When a sigma factor is associated with the core the holoenzyme is formed, which can initiate transcription.

It carries out the reaction RNA(n) + a ribonucleoside 5'-triphosphate = RNA(n+1) + diphosphate. Functionally, DNA-dependent RNA polymerase catalyzes the transcription of DNA into RNA using the four ribonucleoside triphosphates as substrates. The polypeptide is DNA-directed RNA polymerase subunit alpha (Mycobacterium bovis (strain ATCC BAA-935 / AF2122/97)).